The sequence spans 353 residues: Uroporphyrinogen decarboxylase (353 aa).

Residues 30-34 (RQAGR), aspartate 79, tyrosine 154, serine 209, and histidine 332 contribute to the substrate site.

The protein belongs to the uroporphyrinogen decarboxylase family. In terms of assembly, homodimer.

The protein localises to the cytoplasm. The catalysed reaction is uroporphyrinogen III + 4 H(+) = coproporphyrinogen III + 4 CO2. The protein operates within porphyrin-containing compound metabolism; protoporphyrin-IX biosynthesis; coproporphyrinogen-III from 5-aminolevulinate: step 4/4. Functionally, catalyzes the decarboxylation of four acetate groups of uroporphyrinogen-III to yield coproporphyrinogen-III. This Mycobacterium marinum (strain ATCC BAA-535 / M) protein is Uroporphyrinogen decarboxylase.